The chain runs to 119 residues: Ribonuclease P protein component (119 aa).

Belongs to the RnpA family. Consists of a catalytic RNA component (M1 or rnpB) and a protein subunit.

It catalyses the reaction Endonucleolytic cleavage of RNA, removing 5'-extranucleotides from tRNA precursor.. Its function is as follows. RNaseP catalyzes the removal of the 5'-leader sequence from pre-tRNA to produce the mature 5'-terminus. It can also cleave other RNA substrates such as 4.5S RNA. The protein component plays an auxiliary but essential role in vivo by binding to the 5'-leader sequence and broadening the substrate specificity of the ribozyme. The chain is Ribonuclease P protein component from Escherichia coli O6:H1 (strain CFT073 / ATCC 700928 / UPEC).